The following is a 420-amino-acid chain: MAP kinase-interacting serine/threonine-protein kinase 1 (420 aa).

Residues 1 to 25 (MGSSEPIPIAESDKRKKKKRKARAT) are disordered. The residue at position 27 (Ser27) is a Phosphoserine; by PAK2. One can recognise a Protein kinase domain in the interval 37–321 (KLTSELLGEG…AAQVLQHPWV (285 aa)). ATP contacts are provided by residues 43 to 51 (LGEGANAKV) and Lys66. Asp158 serves as the catalytic Proton acceptor. Residues Ser168 and Ser173 each carry the phosphoserine modification. 3 positions are modified to phosphothreonine: Thr197, Thr202, and Thr332. The disordered stretch occupies residues 386–420 (LSPPSKSRLARRRALAQAGRSGDAPPSPTPTTPAP). The segment covering 400–409 (LAQAGRSGDA) has biased composition (low complexity). Pro residues predominate over residues 410 to 420 (PPSPTPTTPAP).

This sequence belongs to the protein kinase superfamily. CAMK Ser/Thr protein kinase family. In terms of assembly, interacts with the C-terminal regions of EIF4G1 and EIF4G2. Also binds to dephosphorylated ERK1 and ERK2, and to the p38 kinases. The cofactor is Mg(2+). In terms of processing, dual phosphorylation of Thr-197 and Thr-202 activates the kinase. Phosphorylation of Thr-332 activates the kinase. MAPK3/ERK1 is one of the kinases which activate MKNK1/MNK1. Phosphorylation by PAK2 leads to a reduced phosphorylation of EIF4G1.

It catalyses the reaction L-seryl-[protein] + ATP = O-phospho-L-seryl-[protein] + ADP + H(+). The catalysed reaction is L-threonyl-[protein] + ATP = O-phospho-L-threonyl-[protein] + ADP + H(+). Phosphorylated and activated by the p38 kinases and kinases in the Erk pathway. May play a role in the response to environmental stress and cytokines. Appears to regulate translation by phosphorylating EIF4E, thus increasing the affinity of this protein for the 7-methylguanosine-containing mRNA cap. This chain is MAP kinase-interacting serine/threonine-protein kinase 1 (MKNK1), found in Bos taurus (Bovine).